A 223-amino-acid polypeptide reads, in one-letter code: Alpha-S2-casein (223 aa).

The N-terminal stretch at 1-15 (MKFFIFTCLLAVALA) is a signal peptide. Serine 23, serine 24, serine 25, serine 72, serine 73, serine 74, serine 77, serine 145, serine 147, serine 151, and serine 159 each carry phosphoserine. A repeat spans 77–141 (SAEVAPEEVK…AGPFTPTVNR (65 aa)). Positions 159-223 (STEVFTKKTK…TNAIPYVRYL (65 aa)) form a repeat.

Belongs to the alpha-casein family. In terms of tissue distribution, mammary gland specific. Secreted in milk.

It localises to the secreted. In terms of biological role, important role in the capacity of milk to transport calcium phosphate. The sequence is that of Alpha-S2-casein (CSN1S2) from Ovis aries (Sheep).